Consider the following 187-residue polypeptide: Resolvase OPG149 (187 aa).

The protein belongs to the RuvC family. Poxviruses-type subfamily. Mg(2+) is required as a cofactor.

Functionally, plays a role in DNA replication by cleaving viral DNA concatamers to yield unit-length viral genomes. The concatamer junctions contain inverted repeat sequences that can be extruded as cruciforms, yielding Holliday junctions that A22 protein cleaves. The chain is Resolvase OPG149 (OPG149) from Vaccinia virus (strain Western Reserve) (VACV).